The sequence spans 233 residues: Large ribosomal subunit protein bL25 (233 aa).

The disordered stretch occupies residues 1 to 23; that stretch reads MATVRELKATARPKSGKGAARAE.

It belongs to the bacterial ribosomal protein bL25 family. CTC subfamily. As to quaternary structure, part of the 50S ribosomal subunit; part of the 5S rRNA/L5/L18/L25 subcomplex. Contacts the 5S rRNA. Binds to the 5S rRNA independently of L5 and L18.

Functionally, this is one of the proteins that binds to the 5S RNA in the ribosome where it forms part of the central protuberance. The chain is Large ribosomal subunit protein bL25 from Nitrobacter hamburgensis (strain DSM 10229 / NCIMB 13809 / X14).